Reading from the N-terminus, the 268-residue chain is Ribonuclease P protein subunit p30 (268 aa).

At Ala2 the chain carries N-acetylalanine. Residues 247–268 (KPRPSEGDEDCLPASKKAKCEG) form a disordered region. Position 251 is a phosphoserine (Ser251).

It belongs to the eukaryotic/archaeal RNase P protein component 3 family. As to quaternary structure, component of nuclear RNase P and RNase MRP ribonucleoproteins. RNase P consists of a catalytic RNA moiety and about 10 protein subunits; POP1, POP4, POP5, POP7, RPP14, RPP21, RPP25, RPP30, RPP38 and RPP40. Within the RNase P complex, POP1, POP7 and RPP25 form the 'finger' subcomplex, POP5, RPP14, RPP40 and homodimeric RPP30 form the 'palm' subcomplex, and RPP21, POP4 and RPP38 form the 'wrist' subcomplex. All subunits of the RNase P complex interact with the catalytic RNA. Several subunits of RNase P are also part of the RNase MRP complex. RNase MRP consists of a catalytic RNA moiety and about 8 protein subunits; POP1, POP7, RPP25, RPP30, RPP38, RPP40 and possibly also POP4 and POP5.

It is found in the nucleus. Its subcellular location is the nucleolus. Its function is as follows. Component of ribonuclease P, a ribonucleoprotein complex that generates mature tRNA molecules by cleaving their 5'-ends. Also a component of the MRP ribonuclease complex, which cleaves pre-rRNA sequences. The chain is Ribonuclease P protein subunit p30 (RPP30) from Homo sapiens (Human).